The primary structure comprises 666 residues: L-aspartate N-monooxygenase (nitrosuccinate-forming) (666 aa).

A disordered region spans residues 645–666; that stretch reads LPAYEDPGVRCPSDDRLTEVTA. Positions 656 to 666 are enriched in basic and acidic residues; sequence PSDDRLTEVTA.

It belongs to the nitrosuccinic acid synthase family. FAD is required as a cofactor.

It carries out the reaction L-aspartate + 3 NADPH + 3 O2 + 2 H(+) = 2-nitrobutanedioate + 3 NADP(+) + 4 H2O. It participates in antibiotic biosynthesis. Part of a gene cluster involved in the biosynthesis of cremeomycin, a light-sensitive o-diazoquinone with antibacterial and antiproliferative effects. Catalyzes the iterative oxidation of L-aspartic acid to nitrosuccinic acid (2-nitrobutanedioate) via N-hydroxyaspartic acid and nitrososuccinic acid. In Streptomyces cremeus, this protein is L-aspartate N-monooxygenase (nitrosuccinate-forming).